We begin with the raw amino-acid sequence, 83 residues long: U25-theraphotoxin-Cg1b (83 aa).

The first 23 residues, 1-23, serve as a signal peptide directing secretion; it reads MRFHTLLFLSFLLLVSCALICTA. Residues 24–48 constitute a propeptide that is removed on maturation; it reads QHPGLEKSGMFHENVGKGQHIEEKR. Intrachain disulfides connect C50–C66, C57–C71, and C65–C79.

The protein belongs to the neurotoxin 07 (Beta/delta-agtx) family. 03 (aga-4) subfamily. JZTX sub-subfamily. Expressed by the venom gland.

It is found in the secreted. Its function is as follows. Probable ion channel inhibitor. The chain is U25-theraphotoxin-Cg1b from Chilobrachys guangxiensis (Chinese earth tiger tarantula).